We begin with the raw amino-acid sequence, 987 residues long: ATP-dependent 6-phosphofructokinase subunit alpha (987 aa).

Residues 1–602 (MPSSSDAINR…DYRYFRDISI (602 aa)) are N-terminal catalytic PFK domain 1. Residues G237, 300–301 (RC), and 330–333 (GDGS) contribute to the ATP site. D331 provides a ligand contact to Mg(2+). Beta-D-fructose 6-phosphate is bound by residues 376–378 (SID), R413, 420–422 (MGR), E477, R504, and 510–513 (HVQR). D378 (proton acceptor) is an active-site residue. The tract at residues 603–616 (YDDGSKQLSEDKRL) is interdomain linker. Positions 617–987 (NIAIVHVGAA…KSLLKKQERY (371 aa)) are C-terminal regulatory PFK domain 2. Residues R686, 743–747 (TVSNN), R781, 788–790 (QGG), E848, R874, 880–883 (HVQQ), and R958 each bind beta-D-fructose 2,6-bisphosphate.

The protein belongs to the phosphofructokinase type A (PFKA) family. ATP-dependent PFK group I subfamily. Eukaryotic two domain clade 'E' sub-subfamily. In terms of assembly, heterooctamer of 4 alpha and 4 beta chains. The cofactor is Mg(2+).

The protein resides in the cytoplasm. The catalysed reaction is beta-D-fructose 6-phosphate + ATP = beta-D-fructose 1,6-bisphosphate + ADP + H(+). The protein operates within carbohydrate degradation; glycolysis; D-glyceraldehyde 3-phosphate and glycerone phosphate from D-glucose: step 3/4. With respect to regulation, allosterically activated by ADP, AMP, or fructose 2,6-bisphosphate, and allosterically inhibited by ATP or citrate. Functionally, catalyzes the phosphorylation of D-fructose 6-phosphate to fructose 1,6-bisphosphate by ATP, the first committing step of glycolysis. This is ATP-dependent 6-phosphofructokinase subunit alpha (PFK1) from Candida albicans (Yeast).